The primary structure comprises 106 residues: RxLR effector protein PSR1 (106 aa).

An N-terminal signal peptide occupies residues 1–20 (MRLTYVLLVAVTTLLVSCDA). Positions 33–46 (RLLRFVEAADEEER) match the RxLR-dEER motif. Residues 50–106 (FSPEKLRKMLGDETYRLKKFGKWDSDGHTFDGLKHYLLLSDSSMVKLRNMYKAWLEQ) are WY domain. The Bipartite nuclear localization signal (NLS) motif lies at 56–69 (RKMLGDETYRLKKF).

The protein belongs to the RxLR effector family. As to quaternary structure, interacts with host PINP1.

Its subcellular location is the secreted. The protein resides in the host nucleus. Its function is as follows. Secreted effector that possesses RNA silencing suppression activity by inhibiting the biogenesis of small RNAs in the host plant to promote enhanced susceptibility of host to the pathogen during infection. Interferes with secondary siRNA production by associating with host nuclear protein PINP1 that acts as a regulator of the accumulation of both microRNAs and endogenous small interfering RNAs. The protein is RxLR effector protein PSR1 of Phytophthora sojae (Soybean stem and root rot agent).